A 322-amino-acid chain; its full sequence is Cytochrome c biogenesis protein CcsA (322 aa).

Transmembrane regions (helical) follow at residues 17-37, 44-64, 71-91, 98-118, 143-163, 225-245, 258-273, and 286-306; these read VVSI…IVGL, GMIA…IYLG, LYES…VPYF, LSAL…SGLL, MVLG…LLVI, VISL…VWAN, ETWA…IYLH, and AIVA…VNLL.

Belongs to the CcmF/CycK/Ccl1/NrfE/CcsA family. In terms of assembly, may interact with Ccs1.

It localises to the plastid. The protein localises to the chloroplast thylakoid membrane. Required during biogenesis of c-type cytochromes (cytochrome c6 and cytochrome f) at the step of heme attachment. The sequence is that of Cytochrome c biogenesis protein CcsA from Vitis vinifera (Grape).